Here is a 64-residue protein sequence, read N- to C-terminus: Putative neurotoxin 4 (64 aa).

An N-terminal signal peptide occupies residues 1-18; the sequence is MKSKFAVLFFTLFLLALA.

Belongs to the scolopendra neurotoxin 6 family. Contains 3 disulfide bonds. As to expression, expressed by the venom gland.

Its subcellular location is the secreted. The polypeptide is Putative neurotoxin 4 (Scolopendra mutilans (Chinese red-headed centipede)).